The sequence spans 483 residues: Regulatory protein ViaA (483 aa).

Belongs to the ViaA family. In terms of assembly, homodimer. Interacts with RavA.

It localises to the cytoplasm. Functionally, component of the RavA-ViaA chaperone complex, which may act on the membrane to optimize the function of some of the respiratory chains. ViaA stimulates the ATPase activity of RavA. This is Regulatory protein ViaA from Shigella flexneri serotype 5b (strain 8401).